The following is a 398-amino-acid chain: Homocysteine-responsive endoplasmic reticulum-resident ubiquitin-like domain member 2 protein (398 aa).

The Ubiquitin-like domain maps to 11-90 (VTLVIKAPNQ…HMVHLVCASR (80 aa)). Disordered stretches follow at residues 90-143 (RTPP…SIRH) and 212-247 (NQSTSNGENAQPVPRPVTNSENPPPNPPRAPPNVAP). Residues 96–125 (PKASKSSKSMGTSSSGRSSSSGSANPGSTS) are compositionally biased toward low complexity. Pro residues predominate over residues 233–245 (NPPPNPPRAPPNV). Residues 298–318 (FVMVMGALILVYMHQAGWFPL) form a helical membrane-spanning segment.

Its subcellular location is the membrane. Its function is as follows. Could be involved in the unfolded protein response (UPR) pathway. This chain is Homocysteine-responsive endoplasmic reticulum-resident ubiquitin-like domain member 2 protein (herpud2), found in Xenopus laevis (African clawed frog).